The sequence spans 225 residues: Sugar fermentation stimulation protein homolog (225 aa).

It belongs to the SfsA family.

This chain is Sugar fermentation stimulation protein homolog, found in Sulfurisphaera tokodaii (strain DSM 16993 / JCM 10545 / NBRC 100140 / 7) (Sulfolobus tokodaii).